The following is a 405-amino-acid chain: Tryptophan synthase beta chain (405 aa).

Lys-95 bears the N6-(pyridoxal phosphate)lysine mark.

This sequence belongs to the TrpB family. As to quaternary structure, tetramer of two alpha and two beta chains. The cofactor is pyridoxal 5'-phosphate.

The enzyme catalyses (1S,2R)-1-C-(indol-3-yl)glycerol 3-phosphate + L-serine = D-glyceraldehyde 3-phosphate + L-tryptophan + H2O. The protein operates within amino-acid biosynthesis; L-tryptophan biosynthesis; L-tryptophan from chorismate: step 5/5. The beta subunit is responsible for the synthesis of L-tryptophan from indole and L-serine. In Pseudomonas putida (strain GB-1), this protein is Tryptophan synthase beta chain.